We begin with the raw amino-acid sequence, 184 residues long: Protein PLANT CADMIUM RESISTANCE 5 (184 aa).

Residues 1–26 (MGRPVGQTNQAQPSVQHTASPSNKVS) show a composition bias toward polar residues. Positions 1–33 (MGRPVGQTNQAQPSVQHTASPSNKVSHNGGIGK) are disordered. Residues 94–114 (AGLLYGALFFTGASFVYSYMF) form a helical membrane-spanning segment.

It belongs to the cornifelin family.

Its subcellular location is the membrane. Its function is as follows. May be involved in heavy metals transport. The sequence is that of Protein PLANT CADMIUM RESISTANCE 5 (PCR5) from Arabidopsis thaliana (Mouse-ear cress).